The chain runs to 332 residues: MNPLIFKEDRPLDLIAVGRLCVDLNANETQRPMEETKTFTKYVGGSPANIAIGASRLGLQTGFIGKVSDDQMGRFITGYLKDNKINTDQIHIDCTGAVTGLAFTEIKSPEDCSILMYRDNVADLNLDPTEVSEDYIKQSKALLISGTALAKSPSREAVFLALEYAHKHDVVVFFDVDYRPYTWQSEAETAVYYNLAAEKSDVIIGTREEFDMMEKLLNYEQSNDQVTAERWFSHYAKIVVIKHGGDGSIAYTRDGQSHRGGIFKTKVLKTFGAGDSYASAFIYGLMQGLEIPQAMRLGGASASIVISKHSCSDAMPTRAEISAFMETAEELV.

This sequence belongs to the carbohydrate kinase PfkB family.

The catalysed reaction is 5-dehydro-2-deoxy-D-gluconate + ATP = 6-phospho-5-dehydro-2-deoxy-D-gluconate + ADP + H(+). Its pathway is polyol metabolism; myo-inositol degradation into acetyl-CoA; acetyl-CoA from myo-inositol: step 5/7. Functionally, catalyzes the phosphorylation of 5-dehydro-2-deoxy-D-gluconate (2-deoxy-5-keto-D-gluconate or DKG) to 6-phospho-5-dehydro-2-deoxy-D-gluconate (DKGP). The chain is 5-dehydro-2-deoxygluconokinase from Bacillus thuringiensis (strain Al Hakam).